Consider the following 204-residue polypeptide: Rho GDP-dissociation inhibitor 1 (204 aa).

Residues 1-36 are disordered; sequence MAEQEPTAEQLAQIAAENEEDEHSVNYKPPAQKSIQ. Alanine 2 carries the N-acetylalanine modification. Serine 34 is modified (phosphoserine). Lysine 43 carries the post-translational modification N6-acetyllysine. Phosphoserine is present on serine 47. Lysine 105 and lysine 127 each carry N6-acetyllysine. Glycyl lysine isopeptide (Lys-Gly) (interchain with G-Cter in SUMO1); alternate cross-links involve residues lysine 138 and lysine 141. Residues lysine 138 and lysine 141 each participate in a glycyl lysine isopeptide (Lys-Gly) (interchain with G-Cter in SUMO2); alternate cross-link. Lysine 141 bears the N6-acetyllysine; alternate mark. Lysine 141 is modified (N6-succinyllysine; alternate). Residue lysine 178 is modified to N6-acetyllysine.

Belongs to the Rho GDI family. Monomer. Interacts with FER. Interacts with PLXNB3. Forms a heterodimer with RAC1. Interacts with RHOA, the affinity is increased by three orders of magnitude when RHOA is prenylated. Interacts with PSMD10; the interaction increases ARHGDIA association with RHOA, leading to ARHGDIA-mediated inactivation of RHOA and ROCK and prolonged AKT activation. Interacts with KANK2; the interaction is direct and may regulate the interaction of ARHGDIA with RHOA, RAC1 and CDC42. Interacts with RHOC. Interacts with CDC42. Interacts with NGFR (via death domain); NGFR binding decreases the affinity for RHOA.

Its subcellular location is the cytoplasm. Its function is as follows. Controls Rho proteins homeostasis. Regulates the GDP/GTP exchange reaction of the Rho proteins by inhibiting the dissociation of GDP from them, and the subsequent binding of GTP to them. Retains Rho proteins such as CDC42, RAC1 and RHOA in an inactive cytosolic pool, regulating their stability and protecting them from degradation. Actively involved in the recycling and distribution of activated Rho GTPases in the cell, mediates extraction from membranes of both inactive and activated molecules due its exceptionally high affinity for prenylated forms. Through the modulation of Rho proteins, may play a role in cell motility regulation. In glioma cells, inhibits cell migration and invasion by mediating the signals of SEMA5A and PLXNB3 that lead to inactivation of RAC1. This chain is Rho GDP-dissociation inhibitor 1 (ARHGDIA), found in Homo sapiens (Human).